Here is a 250-residue protein sequence, read N- to C-terminus: Triosephosphate isomerase (250 aa).

A substrate-binding site is contributed by Asn9–Lys11. The Electrophile role is filled by His94. Glu166 (proton acceptor) is an active-site residue. Substrate is bound by residues Gly172, Ser211, and Gly232–Gly233.

It belongs to the triosephosphate isomerase family. Homodimer.

The protein localises to the cytoplasm. The enzyme catalyses D-glyceraldehyde 3-phosphate = dihydroxyacetone phosphate. The protein operates within carbohydrate biosynthesis; gluconeogenesis. It participates in carbohydrate degradation; glycolysis; D-glyceraldehyde 3-phosphate from glycerone phosphate: step 1/1. Its function is as follows. Involved in the gluconeogenesis. Catalyzes stereospecifically the conversion of dihydroxyacetone phosphate (DHAP) to D-glyceraldehyde-3-phosphate (G3P). The protein is Triosephosphate isomerase of Methylococcus capsulatus (strain ATCC 33009 / NCIMB 11132 / Bath).